Here is a 391-residue protein sequence, read N- to C-terminus: Pectate lyase D (391 aa).

A signal peptide spans 1–31 (MNNTRVSFRSTKSLLAAIIATSMMTWSVNRA). The Ca(2+) site is built by Asp170 and Asp213. The active site involves Arg266.

This sequence belongs to the polysaccharide lyase 1 family. PLBC subfamily. It depends on Ca(2+) as a cofactor.

Its subcellular location is the secreted. It catalyses the reaction Eliminative cleavage of (1-&gt;4)-alpha-D-galacturonan to give oligosaccharides with 4-deoxy-alpha-D-galact-4-enuronosyl groups at their non-reducing ends.. The protein operates within glycan metabolism; pectin degradation; 2-dehydro-3-deoxy-D-gluconate from pectin: step 2/5. Functionally, involved in maceration and soft-rotting of plant tissue. The chain is Pectate lyase D (pelD) from Dickeya chrysanthemi (Pectobacterium chrysanthemi).